We begin with the raw amino-acid sequence, 314 residues long: 4-hydroxy-3-methylbut-2-enyl diphosphate reductase (314 aa).

Position 12 (C12) interacts with [4Fe-4S] cluster. Residues H41 and H74 each coordinate (2E)-4-hydroxy-3-methylbut-2-enyl diphosphate. 2 residues coordinate dimethylallyl diphosphate: H41 and H74. The isopentenyl diphosphate site is built by H41 and H74. C96 lines the [4Fe-4S] cluster pocket. H124 lines the (2E)-4-hydroxy-3-methylbut-2-enyl diphosphate pocket. Residue H124 coordinates dimethylallyl diphosphate. Residue H124 participates in isopentenyl diphosphate binding. The active-site Proton donor is E126. (2E)-4-hydroxy-3-methylbut-2-enyl diphosphate is bound at residue T167. Position 197 (C197) interacts with [4Fe-4S] cluster. 4 residues coordinate (2E)-4-hydroxy-3-methylbut-2-enyl diphosphate: S225, S226, N227, and S269. The dimethylallyl diphosphate site is built by S225, S226, N227, and S269. S225, S226, N227, and S269 together coordinate isopentenyl diphosphate.

The protein belongs to the IspH family. The cofactor is [4Fe-4S] cluster.

It carries out the reaction isopentenyl diphosphate + 2 oxidized [2Fe-2S]-[ferredoxin] + H2O = (2E)-4-hydroxy-3-methylbut-2-enyl diphosphate + 2 reduced [2Fe-2S]-[ferredoxin] + 2 H(+). It catalyses the reaction dimethylallyl diphosphate + 2 oxidized [2Fe-2S]-[ferredoxin] + H2O = (2E)-4-hydroxy-3-methylbut-2-enyl diphosphate + 2 reduced [2Fe-2S]-[ferredoxin] + 2 H(+). It functions in the pathway isoprenoid biosynthesis; dimethylallyl diphosphate biosynthesis; dimethylallyl diphosphate from (2E)-4-hydroxy-3-methylbutenyl diphosphate: step 1/1. It participates in isoprenoid biosynthesis; isopentenyl diphosphate biosynthesis via DXP pathway; isopentenyl diphosphate from 1-deoxy-D-xylulose 5-phosphate: step 6/6. Its function is as follows. Catalyzes the conversion of 1-hydroxy-2-methyl-2-(E)-butenyl 4-diphosphate (HMBPP) into a mixture of isopentenyl diphosphate (IPP) and dimethylallyl diphosphate (DMAPP). Acts in the terminal step of the DOXP/MEP pathway for isoprenoid precursor biosynthesis. The sequence is that of 4-hydroxy-3-methylbut-2-enyl diphosphate reductase from Haemophilus influenzae (strain PittGG).